The chain runs to 118 residues: Small ribosomal subunit protein uS13 (118 aa).

A disordered region spans residues 94 to 118; sequence SLPLRGQRTKTNARTRKGPRKPIKR.

This sequence belongs to the universal ribosomal protein uS13 family. In terms of assembly, part of the 30S ribosomal subunit. Forms a loose heterodimer with protein S19. Forms two bridges to the 50S subunit in the 70S ribosome.

Located at the top of the head of the 30S subunit, it contacts several helices of the 16S rRNA. In the 70S ribosome it contacts the 23S rRNA (bridge B1a) and protein L5 of the 50S subunit (bridge B1b), connecting the 2 subunits; these bridges are implicated in subunit movement. Contacts the tRNAs in the A and P-sites. The polypeptide is Small ribosomal subunit protein uS13 (Pseudoalteromonas translucida (strain TAC 125)).